The following is a 181-amino-acid chain: Major urinary protein (181 aa).

An N-terminal signal peptide occupies residues 1–19 (MKLLLLLLCLGLTLVCGHA). N-linked (GlcNAc...) asparagine glycosylation occurs at Asn54. A disulfide bridge links Cys83 with Cys176.

This sequence belongs to the calycin superfamily. Lipocalin family. As to expression, abundant in the urine of adult male rats but absent from that of females.

Its subcellular location is the cytoplasm. The protein localises to the cytosol. The protein resides in the secreted. Functionally, major urinary proteins (Mups) bind and release pheromones. They may also protect pheromones from oxidation. In this context, they play a role in the regulation of social behaviors, such as aggression, mating, pup-suckling, territory establishment and dominance. Acts as a kairomone, detected by the prey vomeronasal organ and inducing fear reactions in mice. This Rattus norvegicus (Rat) protein is Major urinary protein.